A 487-amino-acid polypeptide reads, in one-letter code: Dihydrofolate synthase/folylpolyglutamate synthase (487 aa).

44 to 46 (DPS) is a binding site for 7,8-dihydropteroate. 74-77 (GKTS) is an ATP binding site. 2 residues coordinate Mg(2+): T76 and S98. 150–153 (SKFE) is a binding site for 7,8-dihydropteroate. E174 contributes to the Mg(2+) binding site. 181–183 (WDA) serves as a coordination point for 7,8-dihydropteroate. 2 residues coordinate Mg(2+): H201 and D203. ATP is bound by residues N301, R338, and 351–354 (DAAH). D384 lines the Mg(2+) pocket.

The protein belongs to the folylpolyglutamate synthase family. In terms of assembly, monomer. Mg(2+) serves as cofactor.

The catalysed reaction is 7,8-dihydropteroate + L-glutamate + ATP = 7,8-dihydrofolate + ADP + phosphate + H(+). It catalyses the reaction (6S)-5,6,7,8-tetrahydrofolyl-(gamma-L-Glu)(n) + L-glutamate + ATP = (6S)-5,6,7,8-tetrahydrofolyl-(gamma-L-Glu)(n+1) + ADP + phosphate + H(+). It functions in the pathway cofactor biosynthesis; tetrahydrofolate biosynthesis; 7,8-dihydrofolate from 2-amino-4-hydroxy-6-hydroxymethyl-7,8-dihydropteridine diphosphate and 4-aminobenzoate: step 2/2. It participates in cofactor biosynthesis; tetrahydrofolylpolyglutamate biosynthesis. Catalyzes the addition of a glutamate residue to dihydropteroate (7,8-dihydropteroate or H2Pte) to form dihydrofolate (7,8-dihydrofolate monoglutamate or H2Pte-Glu). Also catalyzes successive additions of L-glutamate to tetrahydrofolate, leading to folylpolyglutamate derivatives. Functionally, is involved in the bioactivation of the antituberculous drug para-aminosalicylic acid (PAS). Is able to use hydroxy-dihydropteroate (H2PtePAS) as substrate, which is the product formed by the action of DHPS (FolP1) on PAS, leading to hydroxy-dihydrofolate (H2PtePAS-Glu). This compound inhibits dihydrofolate reductase DHFR (DfrA), the next enzyme in the folate pathway, and thus disrupts the folate-dependent metabolic pathways. This chain is Dihydrofolate synthase/folylpolyglutamate synthase, found in Mycobacterium tuberculosis (strain ATCC 25618 / H37Rv).